Reading from the N-terminus, the 69-residue chain is Conotoxin Eb6.9 (69 aa).

The N-terminal stretch at 1–17 (VLIIAVLFLTACQLTTA) is a signal peptide. The propeptide occupies 18 to 41 (ETYSRGRQKHRARRSTDKNSKWTR). Intrachain disulfides connect C43–C57, C50–C61, and C56–C68.

The protein belongs to the conotoxin O1 superfamily. As to expression, expressed by the venom duct.

The protein localises to the secreted. The polypeptide is Conotoxin Eb6.9 (E1) (Conus ebraeus (Hebrew cone)).